The chain runs to 628 residues: Probable potassium transport system protein Kup (628 aa).

12 consecutive transmembrane segments (helical) span residues 15–35, 49–69, 106–126, 141–161, 174–194, 210–230, 254–274, 295–315, 343–363, 369–389, 398–418, and 425–445; these read FAAEIGALGVVFGDIGTSPLY, FLGGDVLGLLSLITWSIILSV, WYLLAAGLLGAAMLIGDGVLT, ISPELEHWVVTLTVLVLLAVF, FFGPIMLMWFGSLGALGVYGI, IMLMVNHPGLAGVILGACFLA, LFVAMPALLLNYFGQGAILLV, LLFLATAATVIASQSIITGVF, IYVGRLNWLLMIACIAVVLGF, LASAYGIAVAFAMVTTSILFI, WPAPAVWAMATGLLTIDFAFA, and IHDGGWLPLSIAAAIIFVMVS.

This sequence belongs to the HAK/KUP transporter (TC 2.A.72) family.

The protein localises to the cell inner membrane. It carries out the reaction K(+)(in) + H(+)(in) = K(+)(out) + H(+)(out). In terms of biological role, transport of potassium into the cell. Likely operates as a K(+):H(+) symporter. The polypeptide is Probable potassium transport system protein Kup (Xanthobacter autotrophicus (strain ATCC BAA-1158 / Py2)).